The sequence spans 312 residues: uncharacterized protein (312 aa).

Positions 95–119 are disordered; the sequence is EKRRENPPKLTLPPLPPPAEERKKP.

It is found in the plastid. The protein localises to the chloroplast. This is an uncharacterized protein from Chlamydomonas moewusii (Chlamydomonas eugametos).